The primary structure comprises 183 residues: Ribosome-recycling factor (183 aa).

This sequence belongs to the RRF family.

It is found in the cytoplasm. In terms of biological role, responsible for the release of ribosomes from messenger RNA at the termination of protein biosynthesis. May increase the efficiency of translation by recycling ribosomes from one round of translation to another. The protein is Ribosome-recycling factor of Deinococcus radiodurans (strain ATCC 13939 / DSM 20539 / JCM 16871 / CCUG 27074 / LMG 4051 / NBRC 15346 / NCIMB 9279 / VKM B-1422 / R1).